A 229-amino-acid chain; its full sequence is NAD(P)H-hydrate epimerase (229 aa).

One can recognise a YjeF N-terminal domain in the interval 10-217 (AINVDLELFN…ALQRKYELNL (208 aa)). Residue 60 to 64 (NNGGD) participates in (6S)-NADPHX binding. Residues Asn61 and Asp125 each coordinate K(+). (6S)-NADPHX-binding positions include 129–135 (GFSFKPP) and Asp158. Ser161 lines the K(+) pocket.

Belongs to the NnrE/AIBP family. The cofactor is K(+).

The enzyme catalyses (6R)-NADHX = (6S)-NADHX. The catalysed reaction is (6R)-NADPHX = (6S)-NADPHX. Functionally, catalyzes the epimerization of the S- and R-forms of NAD(P)HX, a damaged form of NAD(P)H that is a result of enzymatic or heat-dependent hydration. This is a prerequisite for the S-specific NAD(P)H-hydrate dehydratase to allow the repair of both epimers of NAD(P)HX. The sequence is that of NAD(P)H-hydrate epimerase from Drosophila virilis (Fruit fly).